Consider the following 199-residue polypeptide: MACVCKAHVGKPAPEFQATAVVDGAFKEVKLSDYKGKYVVLFFYPLDFTFVCPTEIVAFSDRAAEFHKLNCEVLGVSVDSQFTHLAWINTPRKEGGLGPLNIPLLADVTRKLSSDYGVLKEDEGIAYRGLFVIDGKGVLRQVTINDLPVGRSVDEALRLVQAFQYTDEHGEVCPAGWTPGSDTIKPNVDDSKEYFSKHN.

The Thioredoxin domain occupies 7–165 (AHVGKPAPEF…ALRLVQAFQY (159 aa)). Cys-52 functions as the Cysteine sulfenic acid (-SOH) intermediate in the catalytic mechanism. Ser-113 is modified (phosphoserine). Thr-183 is subject to Phosphothreonine. Position 197 is an N6-acetyllysine (Lys-197).

It belongs to the peroxiredoxin family. AhpC/Prx1 subfamily. In terms of assembly, homodimer; disulfide-linked, upon oxidation. 5 homodimers assemble to form a ring-like decamer. Interacts with TIPIN. Post-translationally, the enzyme can be inactivated by further oxidation of the cysteine sulfenic acid (C(P)-SOH) to sulphinic acid (C(P)-SO2H) instead of its condensation to a disulfide bond. It can be reactivated by forming a transient disulfide bond with sulfiredoxin SRXN1, which reduces the cysteine sulfinic acid in an ATP- and Mg-dependent manner. Acetylation increases resistance to transition to high molecular-mass complexes. Deacetylated by HDAC6 which decreases reducing activity.

It localises to the cytoplasm. It catalyses the reaction a hydroperoxide + [thioredoxin]-dithiol = an alcohol + [thioredoxin]-disulfide + H2O. Its function is as follows. Thiol-specific peroxidase that catalyzes the reduction of hydrogen peroxide and organic hydroperoxides to water and alcohols, respectively. Plays a role in cell protection against oxidative stress by detoxifying peroxides and as sensor of hydrogen peroxide-mediated signaling events. Might participate in the signaling cascades of growth factors and tumor necrosis factor-alpha by regulating the intracellular concentrations of H(2)O(2). This Bos taurus (Bovine) protein is Peroxiredoxin-2 (PRDX2).